Consider the following 129-residue polypeptide: Small ribosomal subunit protein uS11 (129 aa).

This sequence belongs to the universal ribosomal protein uS11 family. Part of the 30S ribosomal subunit. Interacts with proteins S7 and S18. Binds to IF-3.

Functionally, located on the platform of the 30S subunit, it bridges several disparate RNA helices of the 16S rRNA. Forms part of the Shine-Dalgarno cleft in the 70S ribosome. This Roseobacter denitrificans (strain ATCC 33942 / OCh 114) (Erythrobacter sp. (strain OCh 114)) protein is Small ribosomal subunit protein uS11.